We begin with the raw amino-acid sequence, 407 residues long: Amylovoran biosynthesis glycosyltransferase AmsK (407 aa).

It belongs to the glycosyltransferase group 1 family. Glycosyltransferase 4 subfamily.

The protein operates within glycan metabolism; exopolysaccharide biosynthesis. Functionally, involved in the biosynthesis of amylovoran which functions as a virulence factor. This chain is Amylovoran biosynthesis glycosyltransferase AmsK (amsK), found in Erwinia amylovora (Fire blight bacteria).